The following is an 837-amino-acid chain: Outer membrane usher protein HifC (837 aa).

The first 26 residues, 1–26 (MKTKNFPLNKIAFACTLLLANPVAWA), serve as a signal peptide directing secretion. C813 and C833 form a disulfide bridge.

It belongs to the fimbrial export usher family.

It localises to the cell outer membrane. In terms of biological role, essential for piliation. The protein is Outer membrane usher protein HifC (hifC) of Haemophilus influenzae.